The primary structure comprises 207 residues: MLRIIFLLSLLFALSNDSVQDFCVANLKRAETPAGYPCIRPIHVKASDFVFSLGTPGNTTNIISAAVTPGFVAQFPALNGLGISTARLDLAPKGVIPMHTHPGASEVLFVLDGSITAGFISSANSVYVQTLKPGQVMVFPQGLLHFQINAGKTPAAALVTFSSASPGLQILDFALFANTLSTELVSATTFLPPATVKTLKGVLGGTG.

The N-terminal stretch at 1–17 is a signal peptide; that stretch reads MLRIIFLLSLLFALSND. Cys23 and Cys38 are disulfide-bonded. The 147-residue stretch at 51–197 folds into the Cupin type-1 domain; sequence FSLGTPGNTT…TTFLPPATVK (147 aa). N-linked (GlcNAc...) asparagine glycosylation occurs at Asn58. Mn(2+) is bound by residues His99, His101, Glu106, and His145.

Belongs to the germin family. Oligomer (believed to be a pentamer but probably hexamer).

Its subcellular location is the secreted. It localises to the extracellular space. The protein localises to the apoplast. Its function is as follows. May play a role in plant defense. Probably has no oxalate oxidase activity even if the active site is conserved. This Brassica napus (Rape) protein is Germin-like protein 1 (GER1).